The sequence spans 37 residues: Cytochrome b6-f complex subunit 7 (37 aa).

The chain crosses the membrane as a helical span at residues 11 to 29 (AVLLMVLVLVGLAWGFLLL).

This sequence belongs to the PetM family. In terms of assembly, the 4 large subunits of the cytochrome b6-f complex are cytochrome b6, subunit IV (17 kDa polypeptide, PetD), cytochrome f and the Rieske protein, while the 4 small subunits are PetG, PetL, PetM and PetN. The complex functions as a dimer.

The protein localises to the cellular thylakoid membrane. In terms of biological role, component of the cytochrome b6-f complex, which mediates electron transfer between photosystem II (PSII) and photosystem I (PSI), cyclic electron flow around PSI, and state transitions. In Rippkaea orientalis (strain PCC 8801 / RF-1) (Cyanothece sp. (strain PCC 8801)), this protein is Cytochrome b6-f complex subunit 7.